We begin with the raw amino-acid sequence, 543 residues long: Splicing factor U2af large subunit B (543 aa).

Residues 1–10 (MADDNGGGGD) show a composition bias toward gly residues. The disordered stretch occupies residues 1–171 (MADDNGGGGD…IPTPSQLPGS (171 aa)). Basic and acidic residues-rich tracts occupy residues 17–78 (VRPE…DRDR) and 88–114 (EHRD…ERDG). Residues 115–126 (HRRHRSRSRSRS) are compositionally biased toward basic residues. RRM domains follow at residues 207-290 (RRVY…RPTD), 327-405 (DRIF…RANQ), and 446-532 (QVVT…YPEN).

Belongs to the splicing factor SR family.

It is found in the nucleus. In terms of biological role, necessary for the splicing of pre-mRNA. This chain is Splicing factor U2af large subunit B (U2AF65B), found in Triticum aestivum (Wheat).